A 298-amino-acid polypeptide reads, in one-letter code: Elongation factor Ts (298 aa).

The involved in Mg(2+) ion dislocation from EF-Tu stretch occupies residues threonine 78–valine 81.

The protein belongs to the EF-Ts family.

The protein resides in the cytoplasm. Its function is as follows. Associates with the EF-Tu.GDP complex and induces the exchange of GDP to GTP. It remains bound to the aminoacyl-tRNA.EF-Tu.GTP complex up to the GTP hydrolysis stage on the ribosome. In Mycoplasmopsis agalactiae (strain NCTC 10123 / CIP 59.7 / PG2) (Mycoplasma agalactiae), this protein is Elongation factor Ts.